A 70-amino-acid chain; its full sequence is Protein SlyX homolog (70 aa).

Belongs to the SlyX family.

The chain is Protein SlyX homolog from Shewanella oneidensis (strain ATCC 700550 / JCM 31522 / CIP 106686 / LMG 19005 / NCIMB 14063 / MR-1).